The primary structure comprises 312 residues: Envelope glycoprotein K (312 aa).

Residues 1-20 (MLLGGRPLHLLVLGVMGAYA) form the signal peptide. At 21–91 (GLGAYYATVA…VVYARRDCRA (71 aa)) the chain is on the extracellular side. N-linked (GlcNAc...) asparagine; by host glycosylation is found at Asn-58 and Asn-67. Residues 92-112 (YLWDVHFRLAAVAWLLYAAFV) traverse the membrane as a helical segment. Residues 113-187 (YARQERRMFG…DPITLAHRHP (75 aa)) lie on the Cytoplasmic side of the membrane. The helical transmembrane segment at 188-208 (TLIALILLELGLRLGARMALF) threads the bilayer. At 209–227 (TTLGVTRAPCALVFPLYAR) the chain is on the extracellular side. A helical transmembrane segment spans residues 228-248 (ALVWIFVLAVGALELLAATLP). The Cytoplasmic segment spans residues 249-280 (HIARVSGATATPARSDGGRAALGVCGACCSTV). A helical transmembrane segment spans residues 281–301 (LAGIFAKALYLCLLVGGVLLF). At 302 to 312 (LHYERHITIFG) the chain is on the extracellular side.

It belongs to the alphaherpesvirinae glycoprotein K family. Interacts (via UL20 interaction region) with protein UL20 homolog (via N-terminus); this interaction probably plays a role in the coordinate transport of protein UL20 homolog and gK to the trans-Golgi network (TGN), and is required for the cell surface expression of gK. Post-translationally, N-glycosylated.

The protein resides in the host cell membrane. It localises to the host endosome membrane. The protein localises to the host Golgi apparatus membrane. Its function is as follows. Glycoprotein that probably modulates membrane fusion events during secondary envelopment of cytoplasmic capsids that bud into specific trans-Golgi network (TGN)-derived membranes. In Sus scrofa (Pig), this protein is Envelope glycoprotein K (gK).